The sequence spans 299 residues: MFSGLLIILVPLIVGYLIPLRQQAALKVINQLLSWMVYLILFFMGISLAFLDNLASNLLAILHYSAVSITVILLCNIAALMWLERGLPWRNHHQQEKLPSRIAMALESLKLCGVVVIGFAIGLSGLAFLQHATEASEYTLILLLFLVGIQLRNNGMTLKQIVLNRRGMIVAVVVVVSSLIGGLINAFILDLPINTALAMASGFGWYSLSGILLTESFGPVIGSAAFFNDLARELIAIMLIPGLIRRSRSTALGLCGATSMDFTLPVLQRTGGLDMVPAAIVHGFILSLLVPILIAFFSA.

The next 8 membrane-spanning stretches (helical) occupy residues 1–21 (MFSG…IPLR), 31–51 (QLLS…LAFL), 58–78 (LLAI…CNIA), 109–129 (LKLC…LAFL), 131–151 (HATE…GIQL), 169–189 (IVAV…AFIL), 207–227 (SLSG…AAFF), and 277–297 (PAAI…IAFF).

It belongs to the LysO family.

It is found in the cell inner membrane. Its function is as follows. Mediates export of lysine. The protein is Lysine exporter LysO of Escherichia coli (strain K12).